The sequence spans 521 residues: Bacillolysin (521 aa).

The N-terminal stretch at M1–A27 is a signal peptide. A propeptide spans A28–H221 (activation peptide). Residues Q283 and D360 each coordinate Ca(2+). Position 364 (H364) interacts with Zn(2+). E365 is an active-site residue. Zn(2+)-binding residues include H368 and E388. D399, D402, D404, E407, and V411 together coordinate Ca(2+). Catalysis depends on H449, which acts as the Proton donor.

Belongs to the peptidase M4 family. Ca(2+) serves as cofactor. Requires Zn(2+) as cofactor.

It localises to the secreted. The catalysed reaction is Similar, but not identical, to that of thermolysin.. Functionally, extracellular zinc metalloprotease. The chain is Bacillolysin (npr) from Bacillus amyloliquefaciens (Bacillus velezensis).